The following is a 347-amino-acid chain: Quinolinate synthase (347 aa).

Iminosuccinate is bound by residues His47 and Ser68. Residue Cys113 coordinates [4Fe-4S] cluster. Residues 139–141 and Ser156 each bind iminosuccinate; that span reads YAN. Cys200 contributes to the [4Fe-4S] cluster binding site. Iminosuccinate contacts are provided by residues 226 to 228 and Thr243; that span reads HPE. Cys297 is a binding site for [4Fe-4S] cluster.

Belongs to the quinolinate synthase family. Type 1 subfamily. It depends on [4Fe-4S] cluster as a cofactor.

It is found in the cytoplasm. It carries out the reaction iminosuccinate + dihydroxyacetone phosphate = quinolinate + phosphate + 2 H2O + H(+). It participates in cofactor biosynthesis; NAD(+) biosynthesis; quinolinate from iminoaspartate: step 1/1. Catalyzes the condensation of iminoaspartate with dihydroxyacetone phosphate to form quinolinate. The chain is Quinolinate synthase from Escherichia coli O45:K1 (strain S88 / ExPEC).